A 155-amino-acid chain; its full sequence is Large ribosomal subunit protein uL13 (155 aa).

This sequence belongs to the universal ribosomal protein uL13 family. In terms of assembly, part of the 50S ribosomal subunit.

Functionally, this protein is one of the early assembly proteins of the 50S ribosomal subunit, although it is not seen to bind rRNA by itself. It is important during the early stages of 50S assembly. The chain is Large ribosomal subunit protein uL13 from Aeropyrum pernix (strain ATCC 700893 / DSM 11879 / JCM 9820 / NBRC 100138 / K1).